A 551-amino-acid polypeptide reads, in one-letter code: Putative transport protein NTHI0043 (551 aa).

5 helical membrane passes run I4–W24, G28–N48, F65–S85, A95–A115, and V157–I177. RCK C-terminal domains are found at residues R191–Y275 and V277–N360. 6 helical membrane passes run M370–I390, A402–F424, I438–V458, L463–L483, Y492–A512, and V529–W549.

It belongs to the AAE transporter (TC 2.A.81) family. YidE subfamily.

It is found in the cell membrane. The protein is Putative transport protein NTHI0043 of Haemophilus influenzae (strain 86-028NP).